The following is a 134-amino-acid chain: Transcription antitermination protein NusB (134 aa).

It belongs to the NusB family.

Functionally, involved in transcription antitermination. Required for transcription of ribosomal RNA (rRNA) genes. Binds specifically to the boxA antiterminator sequence of the ribosomal RNA (rrn) operons. The protein is Transcription antitermination protein NusB of Syntrophomonas wolfei subsp. wolfei (strain DSM 2245B / Goettingen).